A 345-amino-acid polypeptide reads, in one-letter code: Polyprenyl transferase dpmpC (345 aa).

8 helical membrane-spanning segments follow: residues 24 to 44 (PVFASFAGLWSTLLAGAARLA), 60 to 80 (GLCFLAAYIFYGAGTVWNDWV), 101 to 121 (VTTFQAMLWMVLQTLATWYLL), 183 to 203 (LYVYPQYILGFIVAWPAVIGW), 220 to 240 (CLPLCSMVYFWIIYLNTAYSY), 261 to 281 (HLHLLLVALASPVPVCMLLFL), 286 to 306 (SFWLWATWLGGWTASFAEQLI), and 319 to 339 (LHKSNFMLGIWTIFACAVELL).

This sequence belongs to the UbiA prenyltransferase family. It depends on Mg(2+) as a cofactor.

Its subcellular location is the membrane. The protein operates within secondary metabolite biosynthesis; terpenoid biosynthesis. In terms of biological role, polyprenyl transferase; part of the gene cluster that mediates the biosynthesis of diterpenoid pyrones. The first step of the pathway is the synthesis of the alpha-pyrone moiety by the polyketide synthase dpmpA via condensation of one acetyl-CoA starter unit with 3 malonyl-CoA units and 2 methylations. The alpha-pyrone is then combined with geranylgeranyl pyrophosphate (GGPP) formed by the GGPP synthase dpmpD through the action of the prenyltransferase dpmpC to yield a linear alpha-pyrone diterpenoid. Subsequent steps in the diterpenoid pyrone biosynthetic pathway involve the decalin core formation, which is initiated by the epoxidation of the C10-C11 olefin by the FAD-dependent oxidoreductase dpmpE, and is followed by a cyclization cascade catalyzed by the terpene cyclase dpmpB. The short chain dehydrogenase/reductase dpmpG then oxidizes the 8S hydroxy group to a ketone and the short chain dehydrogenase/reductase dpmpH reduces the ketone to the 8R hydroxy group to yield higginsianin B. Higginsianin B is further methylated by the methyltransferase dpmpI to produce the intermediate named FDDP B. The cytochrome P450 monooxygenase dpmpJ then oxidizes the C-26 methyl to primary alcohol, producing the final diterpenoid pyrone with a C-26 primary alcohol on the gamma-pyrone moiety named FDDP C. In Macrophomina phaseolina (strain MS6) (Charcoal rot fungus), this protein is Polyprenyl transferase dpmpC.